A 164-amino-acid polypeptide reads, in one-letter code: UPF0225 protein Shewmr4_2054 (164 aa).

Belongs to the UPF0225 family.

In Shewanella sp. (strain MR-4), this protein is UPF0225 protein Shewmr4_2054.